The chain runs to 153 residues: Arachidonate 5-lipoxygenase-activating protein (153 aa).

Residues 1 to 8 are Lumenal-facing; that stretch reads MDQETVGN. The chain crosses the membrane as a helical span at residues 9 to 30; sequence VVLLAIVTLISVVQNGFFAHKV. Over 31-52 the chain is Cytoplasmic; it reads EHESRTQNGRSFQRTGTLAFER. The chain crosses the membrane as a helical span at residues 53 to 77; that stretch reads VYTANQNCVDAYPTFLAVLWSAGLL. The Lumenal portion of the chain corresponds to 78 to 80; it reads CSQ. The chain crosses the membrane as a helical span at residues 81–102; it reads VPAAFAGLMYLLVRQKYFVGYL. Over 103-107 the chain is Cytoplasmic; the sequence is GERTQ. The stretch at 108–115 is an intramembrane region; sequence STPGYIFG. A helical membrane pass occupies residues 116–128; that stretch reads KRIILFLFLMSVA. Topologically, residues 129 to 153 are lumenal; that stretch reads GIFNYYLIFFFGSDFENYIKTVTTT.

It belongs to the MAPEG family. As to quaternary structure, homotrimer. Interacts with LTC4S and ALOX5.

The protein resides in the nucleus membrane. The protein localises to the endoplasmic reticulum membrane. In terms of biological role, required for leukotriene biosynthesis by ALOX5 (5-lipoxygenase). Anchors ALOX5 to the membrane. Binds arachidonic acid, and could play an essential role in the transfer of arachidonic acid to ALOX5. Binds to MK-886, a compound that blocks the biosynthesis of leukotrienes. This chain is Arachidonate 5-lipoxygenase-activating protein (ALOX5AP), found in Macaca mulatta (Rhesus macaque).